We begin with the raw amino-acid sequence, 89 residues long: MAKKSKIAKDRKQRVLVLKYASLRSELKKKADYVGLSQIPAKASPVRLKNRDSIDGRPRGYIRKFGISRIKFRQLAHEGKLPGVKKTSW.

Belongs to the universal ribosomal protein uS14 family. As to quaternary structure, part of the 30S ribosomal subunit. Contacts proteins S3 and S10.

Its function is as follows. Binds 16S rRNA, required for the assembly of 30S particles and may also be responsible for determining the conformation of the 16S rRNA at the A site. In Phytoplasma australiense, this protein is Small ribosomal subunit protein uS14.